The sequence spans 445 residues: Phosphoglucosamine mutase (445 aa).

S102 (phosphoserine intermediate) is an active-site residue. The Mg(2+) site is built by S102, D241, D243, and D245. S102 is modified (phosphoserine).

Belongs to the phosphohexose mutase family. It depends on Mg(2+) as a cofactor. Post-translationally, activated by phosphorylation.

It carries out the reaction alpha-D-glucosamine 1-phosphate = D-glucosamine 6-phosphate. Functionally, catalyzes the conversion of glucosamine-6-phosphate to glucosamine-1-phosphate. The protein is Phosphoglucosamine mutase of Acinetobacter baumannii (strain SDF).